A 560-amino-acid polypeptide reads, in one-letter code: Membrane protein insertase YidC (560 aa).

Residues 7 to 27 traverse the membrane as a helical segment; sequence ILIVALAIVSYVMVLKWNQDY. Residues 38 to 56 are compositionally biased toward polar residues; sequence ASSTTTSGLPDTATGNNAA. A disordered region spans residues 38-76; it reads ASSTTTSGLPDTATGNNAAASDDIPRAASDTSAPAETPV. Helical transmembrane passes span 367-387, 437-457, 468-488, and 515-535; these read IVGN…GIFF, LGGC…YWVL, FMLW…PIIM, and PIIF…YWVV.

It belongs to the OXA1/ALB3/YidC family. Type 1 subfamily. Interacts with the Sec translocase complex via SecD. Specifically interacts with transmembrane segments of nascent integral membrane proteins during membrane integration.

Its subcellular location is the cell inner membrane. Functionally, required for the insertion and/or proper folding and/or complex formation of integral membrane proteins into the membrane. Involved in integration of membrane proteins that insert both dependently and independently of the Sec translocase complex, as well as at least some lipoproteins. Aids folding of multispanning membrane proteins. This is Membrane protein insertase YidC from Pseudomonas fluorescens (strain Pf0-1).